We begin with the raw amino-acid sequence, 485 residues long: Aspartyl/glutamyl-tRNA(Asn/Gln) amidotransferase subunit B (485 aa).

The protein belongs to the GatB/GatE family. GatB subfamily. As to quaternary structure, heterotrimer of A, B and C subunits.

The catalysed reaction is L-glutamyl-tRNA(Gln) + L-glutamine + ATP + H2O = L-glutaminyl-tRNA(Gln) + L-glutamate + ADP + phosphate + H(+). The enzyme catalyses L-aspartyl-tRNA(Asn) + L-glutamine + ATP + H2O = L-asparaginyl-tRNA(Asn) + L-glutamate + ADP + phosphate + 2 H(+). In terms of biological role, allows the formation of correctly charged Asn-tRNA(Asn) or Gln-tRNA(Gln) through the transamidation of misacylated Asp-tRNA(Asn) or Glu-tRNA(Gln) in organisms which lack either or both of asparaginyl-tRNA or glutaminyl-tRNA synthetases. The reaction takes place in the presence of glutamine and ATP through an activated phospho-Asp-tRNA(Asn) or phospho-Glu-tRNA(Gln). This chain is Aspartyl/glutamyl-tRNA(Asn/Gln) amidotransferase subunit B, found in Cupriavidus taiwanensis (strain DSM 17343 / BCRC 17206 / CCUG 44338 / CIP 107171 / LMG 19424 / R1) (Ralstonia taiwanensis (strain LMG 19424)).